A 129-amino-acid chain; its full sequence is Small ribosomal subunit protein uS11 (129 aa).

This sequence belongs to the universal ribosomal protein uS11 family. Part of the 30S ribosomal subunit. Interacts with proteins S7 and S18. Binds to IF-3.

Located on the platform of the 30S subunit, it bridges several disparate RNA helices of the 16S rRNA. Forms part of the Shine-Dalgarno cleft in the 70S ribosome. This is Small ribosomal subunit protein uS11 from Lactiplantibacillus plantarum (strain ATCC BAA-793 / NCIMB 8826 / WCFS1) (Lactobacillus plantarum).